Reading from the N-terminus, the 434-residue chain is Adenylosuccinate synthetase (434 aa).

Residues 14–20 (GDEGKGK) and 42–44 (GHE) contribute to the GTP site. The active-site Proton acceptor is aspartate 15. Mg(2+)-binding residues include aspartate 15 and glycine 42. IMP contacts are provided by residues 15–18 (DEGK), 40–43 (NSGH), threonine 133, arginine 147, asparagine 229, threonine 244, and arginine 308. The Proton donor role is filled by histidine 43. 304–310 (VTTGRVR) contributes to the substrate binding site. Residues arginine 310, 336 to 338 (KLD), and 422 to 424 (GTG) each bind GTP.

It belongs to the adenylosuccinate synthetase family. Homodimer. Mg(2+) serves as cofactor.

The protein resides in the cytoplasm. The enzyme catalyses IMP + L-aspartate + GTP = N(6)-(1,2-dicarboxyethyl)-AMP + GDP + phosphate + 2 H(+). It functions in the pathway purine metabolism; AMP biosynthesis via de novo pathway; AMP from IMP: step 1/2. Functionally, plays an important role in the salvage pathway for purine nucleotide biosynthesis. Catalyzes the first committed step in the biosynthesis of AMP from IMP. The protein is Adenylosuccinate synthetase of Theileria parva (East coast fever infection agent).